The following is a 278-amino-acid chain: tRNA (guanine-N(7)-)-methyltransferase (278 aa).

S-adenosyl-L-methionine contacts are provided by residues G63, 86–87 (EL), 119–120 (NA), and L139. The active site involves D142. Position 217 to 219 (217 to 219 (TEE)) interacts with S-adenosyl-L-methionine. A disordered region spans residues 259-278 (IDSTTTTTTSTATITEVESK). The segment covering 261–278 (STTTTTTSTATITEVESK) has biased composition (low complexity).

The protein belongs to the class I-like SAM-binding methyltransferase superfamily. TrmB family.

The protein resides in the nucleus. The enzyme catalyses guanosine(46) in tRNA + S-adenosyl-L-methionine = N(7)-methylguanosine(46) in tRNA + S-adenosyl-L-homocysteine. Its pathway is tRNA modification; N(7)-methylguanine-tRNA biosynthesis. Its function is as follows. Catalyzes the formation of N(7)-methylguanine at position 46 (m7G46) in tRNA. The sequence is that of tRNA (guanine-N(7)-)-methyltransferase (mettl1) from Dictyostelium discoideum (Social amoeba).